A 787-amino-acid chain; its full sequence is Bifunctional dethiobiotin synthetase/adenosylmethionine-8-amino-7-oxononanoate aminotransferase (787 aa).

23–28 contacts ATP; that stretch reads DVGKTI. Thr-27 is a binding site for Mg(2+). Thr-54 contributes to the substrate binding site. Residues Asp-61 and Glu-123 each contribute to the Mg(2+) site. ATP-binding positions include 123-126 and 184-185; these read ETAG and KD. A (8S)-8-amino-7-oxononanoate-binding site is contributed by 323–324; that stretch reads WW. 384–385 is a binding site for pyridoxal 5'-phosphate; sequence GS. Position 421 (Tyr-421) interacts with (8S)-8-amino-7-oxononanoate. Asp-582 lines the pyridoxal 5'-phosphate pocket. Lys-611 and Gly-645 together coordinate (8S)-8-amino-7-oxononanoate. Residue 646 to 647 participates in pyridoxal 5'-phosphate binding; that stretch reads HS. Arg-756 contributes to the (8S)-8-amino-7-oxononanoate binding site.

This sequence in the N-terminal section; belongs to the dethiobiotin synthetase family. The protein in the C-terminal section; belongs to the class-III pyridoxal-phosphate-dependent aminotransferase family. BioA subfamily. In terms of assembly, homodimer. It depends on Mg(2+) as a cofactor. The cofactor is pyridoxal 5'-phosphate.

It is found in the mitochondrion matrix. It catalyses the reaction (7R,8S)-7,8-diammoniononanoate + CO2 + ATP = (4R,5S)-dethiobiotin + ADP + phosphate + 3 H(+). The catalysed reaction is (8S)-8-amino-7-oxononanoate + S-adenosyl-L-methionine = S-adenosyl-4-methylsulfanyl-2-oxobutanoate + (7R,8S)-7,8-diammoniononanoate. The protein operates within cofactor biosynthesis; biotin biosynthesis; biotin from 7,8-diaminononanoate: step 1/2. It functions in the pathway cofactor biosynthesis; biotin biosynthesis; 7,8-diaminononanoate from 8-amino-7-oxononanoate (SAM route): step 1/1. Bifunctional enzyme; part of the cluster involved in the biosynthesis of biotin (also known as vitamin B8 or vitamin H), a water-soluble vitamin that functions as a prosthetic group of many carboxylases, such as acetyl-CoA carboxylase and pyruvate carboxylase. Catalyzes a mechanistically unusual reaction, the ATP-dependent insertion of CO2 between the N7 and N8 nitrogen atoms of 7,8-diaminopelargonic acid (DAPA) to form an ureido ring. Also catalyzes the transfer of the alpha-amino group from S-adenosyl-L-methionine (SAM) to 7-keto-8-aminopelargonic acid (KAPA) to form 7,8-diaminopelargonic acid (DAPA). It is the only animotransferase known to utilize SAM as an amino donor. In Emericella nidulans (strain FGSC A4 / ATCC 38163 / CBS 112.46 / NRRL 194 / M139) (Aspergillus nidulans), this protein is Bifunctional dethiobiotin synthetase/adenosylmethionine-8-amino-7-oxononanoate aminotransferase.